Consider the following 532-residue polypeptide: Telomerase Cajal body protein 1 (532 aa).

Positions 1–53 (MKTSEERLLAPDSLPPDLAPAPVPQGSPAEKNTDFEPVPPPCGGDDQPQLATD) are disordered. Pro residues predominate over residues 13 to 25 (SLPPDLAPAPVPQ). A phosphoserine mark is found at Ser-27, Ser-61, and Ser-83. The segment at 80-122 (SELSPGIEEQDVSEHASLPGEETNLPELESGEATEGVSEERAE) is disordered. WD repeat units follow at residues 151 to 190 (RSEN…YSEQ), 206 to 251 (EGDT…LRAS), 256 to 297 (NHLD…RDCE), 307 to 348 (GQSG…ALLG), 349 to 389 (GHQG…HLLW), and 395 to 434 (VTTN…SDDS). A Phosphothreonine modification is found at Thr-474. Ser-476 bears the Phosphoserine mark. The disordered stretch occupies residues 510-532 (DPSSPVDDQDEKGQRRTEAVGMS). The segment covering 520–532 (EKGQRRTEAVGMS) has biased composition (basic and acidic residues).

The protein belongs to the TCAB1 family. Component of the telomerase holoenzyme complex composed of one molecule of TERT, one molecule of WRAP53/TCAB1, two molecules of H/ACA ribonucleoprotein complex subunits DKC1, NOP10, NHP2 and GAR1, and a telomerase RNA template component (TERC). The telomerase holoenzyme complex is associated with TEP1, SMG6/EST1A and POT1. Interacts with the chaperonin-containing T-complex (TRiC) complex; which mediates the folding of WRAP53/TCAB1. Interacts with COIL. Interacts with SMN1. Interacts with RNF8. Interacts with histone H2AX. In terms of processing, phosphorylated at Ser-61 by ATM in response to DNA damage, promoting its interaction with histone H2AX and localization to sites of DNA double-strand breaks.

The protein localises to the nucleus. It is found in the cajal body. The protein resides in the chromosome. Its subcellular location is the telomere. Its function is as follows. RNA chaperone that plays a key role in telomere maintenance and RNA localization to Cajal bodies. Specifically recognizes and binds the Cajal body box (CAB box) present in both small Cajal body RNAs (scaRNAs) and telomerase RNA template component (TERC). Essential component of the telomerase holoenzyme complex, a ribonucleoprotein complex essential for the replication of chromosome termini that elongates telomeres in most eukaryotes. In the telomerase holoenzyme complex, required to stimulate the catalytic activity of the complex. Acts by specifically binding the CAB box of the TERC RNA and controlling the folding of the CR4/CR5 region of the TERC RNA, a critical step for telomerase activity. In addition, also controls telomerase holoenzyme complex localization to Cajal body. During S phase, required for delivery of TERC to telomeres during S phase and for telomerase activity. In addition to its role in telomere maintenance, also required for Cajal body formation, probably by mediating localization of scaRNAs to Cajal bodies. Also plays a role in DNA repair: phosphorylated by ATM in response to DNA damage and relocalizes to sites of DNA double-strand breaks to promote the repair of DNA double-strand breaks. Acts by recruiting the ubiquitin ligase RNF8 to DNA breaks and promote both homologous recombination (HR) and non-homologous end joining (NHEJ). This Mus musculus (Mouse) protein is Telomerase Cajal body protein 1.